A 267-amino-acid chain; its full sequence is GTP cyclohydrolase FolE2 (267 aa).

The protein belongs to the GTP cyclohydrolase IV family.

The catalysed reaction is GTP + H2O = 7,8-dihydroneopterin 3'-triphosphate + formate + H(+). The protein operates within cofactor biosynthesis; 7,8-dihydroneopterin triphosphate biosynthesis; 7,8-dihydroneopterin triphosphate from GTP: step 1/1. Functionally, converts GTP to 7,8-dihydroneopterin triphosphate. This is GTP cyclohydrolase FolE2 from Nitrosococcus oceani (strain ATCC 19707 / BCRC 17464 / JCM 30415 / NCIMB 11848 / C-107).